Here is a 490-residue protein sequence, read N- to C-terminus: Histone-lysine N-methyltransferase SMYD1 (490 aa).

Positions 7–253 constitute an SET domain; the sequence is ENVEVFTAEG…EGEELTVSYI (247 aa). Residue 17 to 19 coordinates S-adenosyl-L-methionine; sequence KGR. Zn(2+)-binding residues include cysteine 52, cysteine 55, cysteine 65, cysteine 68, cysteine 74, cysteine 78, histidine 86, and cysteine 90. The MYND-type zinc finger occupies 52 to 90; that stretch reads CHTCFKRQEKLHRCGQCKFAHYCDRTCQKDAWLNHKNEC. Residues histidine 135 and 205 to 206 contribute to the S-adenosyl-L-methionine site; that span reads NH. Cysteine 208 contacts Zn(2+). 270 to 272 provides a ligand contact to S-adenosyl-L-methionine; sequence YYF. Residues cysteine 274, cysteine 276, and cysteine 279 each contribute to the Zn(2+) site.

This sequence belongs to the class V-like SAM-binding methyltransferase superfamily. In terms of assembly, interacts with HDAC1, HDAC2 and HDAC3. Interacts (via MYND-type zinc finger) with NACA isoform skNAC. Expression seems mostly restricted to heart and skeletal muscle.

It localises to the cytoplasm. The protein localises to the nucleus. It catalyses the reaction L-lysyl(4)-[histone H3] + 3 S-adenosyl-L-methionine = N(6),N(6),N(6)-trimethyl-L-lysyl(4)-[histone H3] + 3 S-adenosyl-L-homocysteine + 3 H(+). Its function is as follows. Methylates histone H3 at 'Lys-4' (H3K4me), seems able to perform both mono-, di-, and trimethylation. Acts as a transcriptional repressor. Essential for cardiomyocyte differentiation and cardiac morphogenesis. The sequence is that of Histone-lysine N-methyltransferase SMYD1 (SMYD1) from Homo sapiens (Human).